The sequence spans 404 residues: WD repeat and SOCS box-containing protein 2 (404 aa).

WD repeat units follow at residues Pro105–Asn148, Gly151–Gln191, Gly195–Lys234, Gly237–Ser276, and Val291–Phe330. Residues His356–Phe404 enclose the SOCS box domain.

Its pathway is protein modification; protein ubiquitination. In terms of biological role, may be a substrate-recognition component of a SCF-like ECS (Elongin-Cullin-SOCS-box protein) E3 ubiquitin ligase complex which mediates the ubiquitination and subsequent proteasomal degradation of target proteins. The chain is WD repeat and SOCS box-containing protein 2 (Wsb2) from Mus musculus (Mouse).